Consider the following 1325-residue polypeptide: MSVALADEPLIDLEEDLEDGEIDDDEEDEQQSSKIQVQKKTFVGDDDVQFVGVEAKNQNDDEDVVYVGPSTDAVCLQNSNSTKSKKPRPLEDDHASSIELAIANALKKKGIEPPMPRMRSSNQDTSDQSLEGSGEGLATANPLLQSTRSSRRRKRKKEREREQKKDKEQQNRSRRDENDVSVVPGGVEDMDEYEMMNVRGGSPPPGGAAPPLSSCGQRFSGADWDMDDGSAATGAAGLGAGGGGGYNSHSSYDSYSDEETNGPGLMNQRRRTRRDNEKEHQRGVNNRKRRDRDRLEGGLAGSGSKRNRRDSGEGGGGGQEKMGGSNRVEPRKLELCKFYLMDCCAKRDKCSYMHKEFPCKYYYLGMDCYAGDDCLFYHGEPLSEQLRNVLLKHMETAPKEILGDFKRISRDIAIVQMTRRHEQLCDQLNRENTWNSIGCGLMGKRQDHQMQQQQQQLQHQQLQQQQEQQQTQQQAAADGGGCIPSLLDMVINPPLSENKRKSRWTEKMGAKAAAGAAGSSERDSTSPDAKPLPPHLDLANLSHVLSAENMAKLNKLGITNLEQMLQVPFGQLTEAGLTLVEIGEIQRKAEDAKPQTQAELESSTPPSKRETEANNSNSKSNGLIMVDYTQYLKDAHVSFSGNDPLDDDRDDDEQLIIDDGNDSTAEEDQQPKKAKAPPAATHESSTEEAPLPSVFDLPSFMNNMLGQGSSARQLLPASATSPNQENAHLPGGDQSTHKSAPIGGGTSTNVLGRILFGDKQSDPEARAAFYRDIIRNPFKAHSGDGDVDSSNENSNSNSHSLTPTPTPEPGSQSPKPEDHDQDMPELPVIAPALPPTTPSLYVRRSMYDFDPVKEQEHGRQELLTEEKEQYQRDTDMRLPFEPMKHYMPATEIDAAIFSHTPIRWQLHEVTIEESSYAQIRASALHKEQRELRDPRMRRILGLPETPDNSGPLGSVPIMGPSSFSVDNIARCATTIASPDLETAVRDSTPSSPPPSVVNLPSMSVPPPSMRVPPPNIQVEKPTVRTDPRRDPRRAVLQAPTKGASTANTTAPNASGGSKQISEIRSLLQVSNWYNNLGTNNKIMVNQQLALVFTELKKFHQLPNDAPKIFDVSFIVNNTTLQQIFAKLFIFVDDNGEVVQIPEEPNGNGAALGGGGDSGGGVGGGGGGGGVVLPNLSQPPPNLSQMLRLPPPNIRMLRMSGMMMQMGNVGPPFNQPPPRGGLMGMPPNGNGLNQGVGNLGGLGQLGINQGGGPVPNGNPFNPFGGNNGGGAGVMNNMNSMGNMGMGFNNFNNNGGRGGHFPGGGSGGNGNGNNRNQRGGNHRNRNI.

2 disordered regions span residues methionine 1–glutamine 36 and valine 74–asparagine 326. Over residues proline 9 to glutamine 30 the composition is skewed to acidic residues. Polar residues predominate over residues arginine 119–glutamate 131. The highly charged stretch occupies residues alanine 138 to arginine 327. A compositionally biased stretch (basic residues) spans serine 149–glutamate 158. The stretch at serine 149–aspartate 179 forms a coiled coil. Residues arginine 159–asparagine 178 are compositionally biased toward basic and acidic residues. Over residues alanine 236–tyrosine 246 the composition is skewed to gly residues. Residues asparagine 276–glutamate 296 adopt a coiled-coil conformation. 2 consecutive C3H1-type zinc fingers follow at residues proline 330–phenylalanine 357 and proline 358–proline 381. Residues lysine 444–aspartate 478 adopt a coiled-coil conformation. Positions lysine 499 to glycine 509 are enriched in basic and acidic residues. Disordered stretches follow at residues lysine 499 to histidine 535, lysine 588 to glycine 622, phenylalanine 639 to phenylalanine 695, serine 710 to glycine 745, alanine 780 to proline 835, aspartate 979 to lysine 1058, glutamate 1143 to valine 1170, and arginine 1295 to isoleucine 1325. The residue at position 524 (serine 524) is a Phosphoserine. Over residues proline 594–proline 606 the composition is skewed to polar residues. Threonine 604 bears the Phosphothreonine mark. Acidic residues predominate over residues proline 644–aspartate 668. A Phosphoserine modification is found at serine 663. Threonine 664 is modified (phosphothreonine). Residues serine 710–asparagine 726 are compositionally biased toward polar residues. Over residues serine 790–serine 800 the composition is skewed to low complexity. Positions serine 1003–asparagine 1015 are enriched in pro residues. Residues proline 1021–arginine 1033 show a composition bias toward basic and acidic residues. Residues glycine 1042–glycine 1056 show a composition bias toward low complexity. 2 stretches are compositionally biased toward gly residues: residues alanine 1149 to valine 1170 and arginine 1295 to asparagine 1309.

Belongs to the suppressor of sable family. Interacts with Wdr82.

The protein resides in the nucleus. It is found in the chromosome. Functionally, RNA-binding protein that suppresses transcription of some RNAs. Together with Wdr82, part of a transcription termination checkpoint that promotes transcription termination of RNAs and their subsequent degradation by the nuclear exosome. Promotes transcription termination of aberrant RNAs, transcripts from genes containing a transposon inserted at their very 5' end or RNAs from heat-shock-inducible repetitive element. Binds RNA preferentially at a sequence that resembles a cryptic 5'-splice site. This Drosophila melanogaster (Fruit fly) protein is Protein suppressor of sable.